Consider the following 301-residue polypeptide: Small ribosomal subunit protein uS3 (301 aa).

The region spanning 39–107 is the KH type-2 domain; sequence VREYLKAKLK…PVAVNIEEVR (69 aa). Positions 211–301 are disordered; sequence GESPGAKLDA…AAAADGTKTE (91 aa). A compositionally biased stretch (basic and acidic residues) spans 224 to 244; the sequence is DEERKPRGPRRDARPGSDRPA. A compositionally biased stretch (low complexity) spans 245–257; that stretch reads PRGARAPRAPAGG.

The protein belongs to the universal ribosomal protein uS3 family. As to quaternary structure, part of the 30S ribosomal subunit. Forms a tight complex with proteins S10 and S14.

Functionally, binds the lower part of the 30S subunit head. Binds mRNA in the 70S ribosome, positioning it for translation. This chain is Small ribosomal subunit protein uS3, found in Polaromonas sp. (strain JS666 / ATCC BAA-500).